A 611-amino-acid polypeptide reads, in one-letter code: Sensor histidine kinase WalK (611 aa).

Topologically, residues 1 to 13 (MNKVGFFRSIQFK) are cytoplasmic. A helical membrane pass occupies residues 14–34 (ITLIYVLLIIIAMQIIGVYFV). Residues 35–182 (NQVEKSLISS…VFNQMKTINT (148 aa)) lie on the Extracellular side of the membrane. The chain crosses the membrane as a helical span at residues 183–203 (ILASGTGLALVLTALLGIFLA). The 53-residue stretch at 204 to 256 (RTITHPLSDMRKQAMELAKGNFSRKVKKYGHDEIGQLATTFNHLTRELEDAQA) folds into the HAMP domain. Over 204-611 (RTITHPLSDM…EEQEDDWDEA (408 aa)) the chain is Cytoplasmic. One can recognise a PAS domain in the interval 263-324 (RKLASVIAYM…QENYTFEDLV (62 aa)). The PAC domain occupies 325–379 (EQQDSMLLEIERDDELTVLRVNFSVIQREHGKIDGLIAVIYDVTEQEKMDQERRE). The 220-residue stretch at 383-602 (NVSHELRTPL…TITFTLPYKE (220 aa)) folds into the Histidine kinase domain. The residue at position 386 (His386) is a Phosphohistidine; by autocatalysis.

As to quaternary structure, homodimer. Interacts with YycH and YycI. Autophosphorylated.

The protein localises to the cell membrane. The catalysed reaction is ATP + protein L-histidine = ADP + protein N-phospho-L-histidine.. In terms of biological role, member of the two-component regulatory system WalK/WalR involved in the regulation of the ftsAZ operon, the yocH and ykvT, cwlO, lytE, ydjM, yjeA, yoeB genes and the tagAB and tagDEF operons. Phosphorylates WalR. This chain is Sensor histidine kinase WalK, found in Bacillus subtilis (strain 168).